Consider the following 288-residue polypeptide: Glycine--tRNA ligase alpha subunit (288 aa).

Belongs to the class-II aminoacyl-tRNA synthetase family. In terms of assembly, tetramer of two alpha and two beta subunits.

The protein localises to the cytoplasm. It carries out the reaction tRNA(Gly) + glycine + ATP = glycyl-tRNA(Gly) + AMP + diphosphate. The polypeptide is Glycine--tRNA ligase alpha subunit (Rickettsia africae (strain ESF-5)).